A 421-amino-acid chain; its full sequence is Myb-related protein Pp2 (421 aa).

HTH myb-type domains are found at residues 9 to 61 (KVGL…TNYL) and 62 to 116 (RPDL…KKRL). 2 consecutive DNA-binding regions (H-T-H motif) follow at residues 37 to 61 (WRAIPKLAGLLRCGKSCRLRWTNYL) and 89 to 112 (WSRIAAQLPGRTDNEIKNYWNTRL). Residues 119-240 (QGLDPNTHLP…VTTKSHEDHR (122 aa)) form a disordered region. A compositionally biased stretch (acidic residues) spans 136-147 (DTEDDTDDEGGD).

The protein resides in the nucleus. Functionally, possible transcription activator. The sequence is that of Myb-related protein Pp2 (PP2) from Physcomitrium patens (Spreading-leaved earth moss).